The chain runs to 243 residues: Zinc import ATP-binding protein ZnuC (243 aa).

The region spanning 4 to 219 (ITVENLSVRY…PEYRALFGTG (216 aa)) is the ABC transporter domain. Residue 36 to 43 (GPNGSGKT) participates in ATP binding.

The protein belongs to the ABC transporter superfamily. Zinc importer (TC 3.A.1.15.5) family. As to quaternary structure, the complex is composed of two ATP-binding proteins (ZnuC), two transmembrane proteins (ZnuB) and a solute-binding protein (ZnuA).

It is found in the cell inner membrane. It carries out the reaction Zn(2+)(out) + ATP(in) + H2O(in) = Zn(2+)(in) + ADP(in) + phosphate(in) + H(+)(in). Functionally, part of the ABC transporter complex ZnuABC involved in zinc import. Responsible for energy coupling to the transport system. The sequence is that of Zinc import ATP-binding protein ZnuC from Jannaschia sp. (strain CCS1).